The following is a 503-amino-acid chain: MAKALPIMFQGTHSDAGKSIIATAFCRIFAKNGWKTAPFKSQNMSLNSYVTVDGKEIGRAQGIQAEAAGVVATTDMNPILIKPSREHESQIVVHGKPYKNMQAFAYRGEFFEKGLAIIHESLDVLMNEYDRLVIEGAGSPAEINLNDRELVNMRVARMANAPVVLIGDIERGGVFASLVGTLQLLDKEDRKRIIGVIINKFRGDLALLKPGLDWFEQYTGVPVLGVVPYLEDLHIDAEDSVSLEQMSTAVNPDKDIDIAVIRYPKISNFTDVDPFLTEPDCHVRFVATAAQLGQPDLLILPGSKNTIEDLLYMKKNGIAEQIAQLNKHHRVTIVGICGGYQMLGARIRDPFGVETPLREISGLNLLPIETTLERKKTTVLSEGILTFTGERFFVKGYEIHMGRSQPLDGNIPFIHVQGRAEGAKSKDERVIGTYFHDLFHNDAFREALLNKIRREKGLAPIYGRQSFRTIREQAFDRLADHVKRHVCIEEIEEKMYMFQRRDV.

The region spanning 255 to 444 (DIDIAVIRYP…FHDLFHNDAF (190 aa)) is the GATase cobBQ-type domain. The active-site Nucleophile is Cys-337. Residue His-436 is part of the active site.

The protein belongs to the CobB/CobQ family. CobQ subfamily.

It functions in the pathway cofactor biosynthesis; adenosylcobalamin biosynthesis. In terms of biological role, catalyzes amidations at positions B, D, E, and G on adenosylcobyrinic A,C-diamide. NH(2) groups are provided by glutamine, and one molecule of ATP is hydrogenolyzed for each amidation. This chain is Cobyric acid synthase, found in Geobacillus sp. (strain WCH70).